Reading from the N-terminus, the 94-residue chain is Small ribosomal subunit protein bS18 (94 aa).

Belongs to the bacterial ribosomal protein bS18 family. Part of the 30S ribosomal subunit. Forms a tight heterodimer with protein bS6.

Functionally, binds as a heterodimer with protein bS6 to the central domain of the 16S rRNA, where it helps stabilize the platform of the 30S subunit. This Albidiferax ferrireducens (strain ATCC BAA-621 / DSM 15236 / T118) (Rhodoferax ferrireducens) protein is Small ribosomal subunit protein bS18.